The following is a 365-amino-acid chain: Delta(7)-sterol 5(6)-desaturase ERG3 (365 aa).

Over 1-92 (MDLVLEVADH…LLPRSSILRE (92 aa)) the chain is Cytoplasmic. Residues 93 to 113 (FLSLWVIVTIFGLLLYLFTAS) traverse the membrane as a helical segment. Topologically, residues 114–140 (LSYVFVFDKSIFNHPRYLKNQMAMEIK) are lumenal. Residues 141–161 (LAVSAIPWMSMLTVPWFVMEL) traverse the membrane as a helical segment. Over 162 to 242 (NGHSKLYMKI…VDGFLQSISY (81 aa)) the chain is Cytoplasmic. One can recognise a Fatty acid hydroxylase domain in the interval 187–311 (TFIFFTDCGV…FTTLWDRLGG (125 aa)). The Histidine box-1 motif lies at 200–204 (HRWLH). The Histidine box-2 signature appears at 213-217 (HKPHH). A helical membrane pass occupies residues 243 to 263 (HIYPLILPLHKVSYLILFTFV). Topologically, residues 264–365 (NFWTVMIHDG…ENDPNTKKNN (102 aa)) are lumenal. The Histidine box-3 motif lies at 288 to 292 (HTVHH). Glycyl lysine isopeptide (Lys-Gly) (interchain with G-Cter in ubiquitin) cross-links involve residues Lys-324 and Lys-344.

The protein belongs to the sterol desaturase family. As to quaternary structure, interacts with ERG28. Fe cation serves as cofactor.

Its subcellular location is the endoplasmic reticulum membrane. The enzyme catalyses episterol + 2 Fe(II)-[cytochrome b5] + O2 + 2 H(+) = 5-dehydroepisterol + 2 Fe(III)-[cytochrome b5] + 2 H2O. It functions in the pathway steroid metabolism; ergosterol biosynthesis; ergosterol from zymosterol: step 3/5. C-5 sterol desaturase; part of the third module of ergosterol biosynthesis pathway that includes the late steps of the pathway. ERG3 catalyzes the introduction of a C-5 double bond in the B ring to produce 5-dehydroepisterol. The third module or late pathway involves the ergosterol synthesis itself through consecutive reactions that mainly occur in the endoplasmic reticulum (ER) membrane. Firstly, the squalene synthase ERG9 catalyzes the condensation of 2 farnesyl pyrophosphate moieties to form squalene, which is the precursor of all steroids. Squalene synthase is crucial for balancing the incorporation of farnesyl diphosphate (FPP) into sterol and nonsterol isoprene synthesis. Secondly, the squalene epoxidase ERG1 catalyzes the stereospecific oxidation of squalene to (S)-2,3-epoxysqualene, which is considered to be a rate-limiting enzyme in steroid biosynthesis. Then, the lanosterol synthase ERG7 catalyzes the cyclization of (S)-2,3 oxidosqualene to lanosterol, a reaction that forms the sterol core. In the next steps, lanosterol is transformed to zymosterol through a complex process involving various demethylation, reduction and desaturation reactions. The lanosterol 14-alpha-demethylase ERG11 (also known as CYP51) catalyzes C14-demethylation of lanosterol to produce 4,4'-dimethyl cholesta-8,14,24-triene-3-beta-ol, which is critical for ergosterol biosynthesis. The C-14 reductase ERG24 reduces the C14=C15 double bond of 4,4-dimethyl-cholesta-8,14,24-trienol to produce 4,4-dimethyl-cholesta-8,24-dienol. 4,4-dimethyl-cholesta-8,24-dienol is substrate of the C-4 demethylation complex ERG25-ERG26-ERG27 in which ERG25 catalyzes the three-step monooxygenation required for the demethylation of 4,4-dimethyl and 4alpha-methylsterols, ERG26 catalyzes the oxidative decarboxylation that results in a reduction of the 3-beta-hydroxy group at the C-3 carbon to an oxo group, and ERG27 is responsible for the reduction of the keto group on the C-3. ERG28 has a role as a scaffold to help anchor ERG25, ERG26 and ERG27 to the endoplasmic reticulum and ERG29 regulates the activity of the iron-containing C4-methylsterol oxidase ERG25. Then, the sterol 24-C-methyltransferase ERG6 catalyzes the methyl transfer from S-adenosyl-methionine to the C-24 of zymosterol to form fecosterol. The C-8 sterol isomerase ERG2 catalyzes the reaction which results in unsaturation at C-7 in the B ring of sterols and thus converts fecosterol to episterol. The sterol-C5-desaturase ERG3 then catalyzes the introduction of a C-5 double bond in the B ring to produce 5-dehydroepisterol. The C-22 sterol desaturase ERG5 further converts 5-dehydroepisterol into ergosta-5,7,22,24(28)-tetraen-3beta-ol by forming the C-22(23) double bond in the sterol side chain. Finally, ergosta-5,7,22,24(28)-tetraen-3beta-ol is substrate of the C-24(28) sterol reductase ERG4 to produce ergosterol. The polypeptide is Delta(7)-sterol 5(6)-desaturase ERG3 (Saccharomyces cerevisiae (strain ATCC 204508 / S288c) (Baker's yeast)).